The chain runs to 193 residues: Ribosomal RNA large subunit methyltransferase E (193 aa).

Residues Gly51, Trp53, Asp69, Asp85, and Asp108 each coordinate S-adenosyl-L-methionine. The active-site Proton acceptor is the Lys148.

Belongs to the class I-like SAM-binding methyltransferase superfamily. RNA methyltransferase RlmE family.

It is found in the cytoplasm. The catalysed reaction is uridine(2552) in 23S rRNA + S-adenosyl-L-methionine = 2'-O-methyluridine(2552) in 23S rRNA + S-adenosyl-L-homocysteine + H(+). In terms of biological role, specifically methylates the uridine in position 2552 of 23S rRNA at the 2'-O position of the ribose in the fully assembled 50S ribosomal subunit. This Methanoregula boonei (strain DSM 21154 / JCM 14090 / 6A8) protein is Ribosomal RNA large subunit methyltransferase E.